The primary structure comprises 527 residues: Glucose-6-phosphate isomerase (527 aa).

Catalysis depends on glutamate 323, which acts as the Proton donor. Residues histidine 352 and lysine 454 contribute to the active site.

The protein belongs to the GPI family.

It is found in the cytoplasm. The enzyme catalyses alpha-D-glucose 6-phosphate = beta-D-fructose 6-phosphate. It functions in the pathway carbohydrate biosynthesis; gluconeogenesis. The protein operates within carbohydrate degradation; glycolysis; D-glyceraldehyde 3-phosphate and glycerone phosphate from D-glucose: step 2/4. Functionally, catalyzes the reversible isomerization of glucose-6-phosphate to fructose-6-phosphate. The chain is Glucose-6-phosphate isomerase from Prochlorococcus marinus (strain MIT 9312).